A 365-amino-acid polypeptide reads, in one-letter code: Caffeic acid 3-O-methyltransferase (365 aa).

Residue N131 coordinates (E)-ferulate. The S-adenosyl-L-homocysteine site is built by G208, D231, D251, M252, M264, and K265. Catalysis depends on H269, which acts as the Proton acceptor. Residue D270 participates in (E)-5-hydroxyferulate binding. Residues E297 and E329 contribute to the active site.

This sequence belongs to the class I-like SAM-binding methyltransferase superfamily. Cation-independent O-methyltransferase family. COMT subfamily. As to quaternary structure, homodimer. As to expression, more abundant in roots and stems.

It carries out the reaction (E)-caffeate + S-adenosyl-L-methionine = (E)-ferulate + S-adenosyl-L-homocysteine + H(+). The enzyme catalyses (E)-5-hydroxyferulate + S-adenosyl-L-methionine = (E)-sinapate + S-adenosyl-L-homocysteine + H(+). Its pathway is aromatic compound metabolism; phenylpropanoid biosynthesis. Catalyzes the conversion of caffeic acid to ferulic acid and of 5-hydroxyferulic acid to sinapic acid. The resulting products may subsequently be converted to the corresponding alcohols that are incorporated into lignins. In Medicago sativa (Alfalfa), this protein is Caffeic acid 3-O-methyltransferase.